We begin with the raw amino-acid sequence, 622 residues long: Protein FAM234B (622 aa).

A disordered region spans residues 1–68 (MATVLSRALK…EPDSDAEVAE (68 aa)). Serine 16 is modified (phosphoserine). Threonine 26 bears the Phosphothreonine mark. Residues serine 30, serine 33, and serine 62 each carry the phosphoserine modification. A helical transmembrane segment spans residues 104 to 124 (TSVFLLTLGISMILVLLCAFL).

This sequence belongs to the FAM234 family.

It is found in the membrane. The protein localises to the golgi outpost. Its subcellular location is the cytoplasm. It localises to the cytoskeleton. The protein resides in the microtubule organizing center. The sequence is that of Protein FAM234B from Homo sapiens (Human).